The chain runs to 314 residues: MTYFQIECVESKTESNRQQYGRFILEPLNKGQGITLGNSLRRTILSDLQGAAIVAVRIAGINHEFSTITGVREDVLEILLNLKKVVLKSHSDTPQIGRIRLQGPAIITTGLFEVPPEILIIDPQQYIATICNNTIFEMEFRIEKGSGYKLVNKGFDKKSIDFLQIDAVFMPVTKFNYTVEEKKISPILIQEKLFLEVWTNGSLSPQEAISEGAQVLHSLFYPLTNLNFQNANNTDNEYEEEINQVLIEELQLSVRAYNCLKRAQINSISDLLDYSQDELLEIKNFGQKSAEEVIEALQNKLGIRLPKEKNIQNT.

The segment at 1–227 is alpha N-terminal domain (alpha-NTD); it reads MTYFQIECVE…SLFYPLTNLN (227 aa). Residues 239 to 314 are alpha C-terminal domain (alpha-CTD); sequence EEEINQVLIE…LPKEKNIQNT (76 aa).

It belongs to the RNA polymerase alpha chain family. In plastids the minimal PEP RNA polymerase catalytic core is composed of four subunits: alpha, beta, beta', and beta''. When a (nuclear-encoded) sigma factor is associated with the core the holoenzyme is formed, which can initiate transcription.

The protein localises to the plastid. The protein resides in the chloroplast. The enzyme catalyses RNA(n) + a ribonucleoside 5'-triphosphate = RNA(n+1) + diphosphate. DNA-dependent RNA polymerase catalyzes the transcription of DNA into RNA using the four ribonucleoside triphosphates as substrates. This is DNA-directed RNA polymerase subunit alpha from Gracilaria tenuistipitata var. liui (Red alga).